The following is a 196-amino-acid chain: Peptidyl-tRNA hydrolase (196 aa).

Y18 is a binding site for tRNA. Residue H23 is the Proton acceptor of the active site. TRNA is bound by residues F69, N71, and N117.

It belongs to the PTH family. Monomer.

It is found in the cytoplasm. The enzyme catalyses an N-acyl-L-alpha-aminoacyl-tRNA + H2O = an N-acyl-L-amino acid + a tRNA + H(+). Functionally, hydrolyzes ribosome-free peptidyl-tRNAs (with 1 or more amino acids incorporated), which drop off the ribosome during protein synthesis, or as a result of ribosome stalling. Its function is as follows. Catalyzes the release of premature peptidyl moieties from peptidyl-tRNA molecules trapped in stalled 50S ribosomal subunits, and thus maintains levels of free tRNAs and 50S ribosomes. In Marinobacter nauticus (strain ATCC 700491 / DSM 11845 / VT8) (Marinobacter aquaeolei), this protein is Peptidyl-tRNA hydrolase.